The chain runs to 99 residues: UPF0473 protein Athe_1150 (99 aa).

This sequence belongs to the UPF0473 family.

The sequence is that of UPF0473 protein Athe_1150 from Caldicellulosiruptor bescii (strain ATCC BAA-1888 / DSM 6725 / KCTC 15123 / Z-1320) (Anaerocellum thermophilum).